The following is a 509-amino-acid chain: 5-hydroxytryptamine receptor (509 aa).

Residues 1-99 lie on the Extracellular side of the membrane; the sequence is MANFTFGDLA…YSHEHLVLTS (99 aa). Asparagine 3, asparagine 47, asparagine 58, asparagine 68, asparagine 72, and asparagine 78 each carry an N-linked (GlcNAc...) asparagine glycan. The helical transmembrane segment at 100-122 threads the bilayer; that stretch reads VILGLFVLCCIIGNCFVIAAVML. At 123-132 the chain is on the cytoplasmic side; that stretch reads ERSLHNVANY. The chain crosses the membrane as a helical span at residues 133–154; it reads LILSLAVADLMVAVLVMPLSVV. Over 155 to 169 the chain is Extracellular; that stretch reads SEISKVWFLHSEVCD. A disulfide bond links cysteine 168 and cysteine 246. A helical transmembrane segment spans residues 170–191; sequence MWISVDVLCCTASILHLVAIAM. At 192 to 210 the chain is on the cytoplasmic side; that stretch reads DRYWAVTSIDYIRRRSARR. The helical transmembrane segment at 211 to 233 threads the bilayer; sequence ILLMIMVVWIVALFISIPPLFGW. The Extracellular segment spans residues 234–259; sequence RDPNNDPDKTGTCIISQDKGYTIFST. Residues 260–281 traverse the membrane as a helical segment; sequence VGAFYLPMLVMMIIYIRIWLVA. Residues 282–432 are Cytoplasmic-facing; it reads RSRIRKDKFQ…LKRERKAART (151 aa). The tract at residues 323-372 is disordered; that stretch reads SPDSTTEKKKRRAPFKSYGCSPRPERKKNRAKKLPENANGVNSNSSSSER. The chain crosses the membrane as a helical span at residues 433-456; it reads LAIITGAFLICWLPFFIIALIGPF. At 457–465 the chain is on the extracellular side; it reads VDPEGIPPF. Residues 466 to 488 form a helical membrane-spanning segment; sequence ARSFVLWLGYFNSLLNPIIYTIF. At 489–509 the chain is on the cytoplasmic side; that stretch reads SPEFRSAFQKILFGKYRRGHR.

It belongs to the G-protein coupled receptor 1 family.

It localises to the cell membrane. This is a receptor for 5-hydroxytryptamine (serotonin), a biogenic hormone that function as a neurotransmitter, a hormone, and a mitogen. The chain is 5-hydroxytryptamine receptor from Lymnaea stagnalis (Great pond snail).